The chain runs to 219 residues: Protein GrpE (219 aa).

Disordered regions lie at residues 1–32 (MSTT…LDAT) and 59–87 (FDGV…AERT).

This sequence belongs to the GrpE family. In terms of assembly, homodimer.

The protein localises to the cytoplasm. Functionally, participates actively in the response to hyperosmotic and heat shock by preventing the aggregation of stress-denatured proteins, in association with DnaK and GrpE. It is the nucleotide exchange factor for DnaK and may function as a thermosensor. Unfolded proteins bind initially to DnaJ; upon interaction with the DnaJ-bound protein, DnaK hydrolyzes its bound ATP, resulting in the formation of a stable complex. GrpE releases ADP from DnaK; ATP binding to DnaK triggers the release of the substrate protein, thus completing the reaction cycle. Several rounds of ATP-dependent interactions between DnaJ, DnaK and GrpE are required for fully efficient folding. In Corynebacterium diphtheriae (strain ATCC 700971 / NCTC 13129 / Biotype gravis), this protein is Protein GrpE.